A 461-amino-acid chain; its full sequence is Siroheme synthase (461 aa).

Residues 1 to 204 form a precorrin-2 dehydrogenase /sirohydrochlorin ferrochelatase region; it reads MRYLPLFVYL…GNFRKANRVI (204 aa). NAD(+) is bound by residues 22 to 23 and 43 to 44; these read IV and KT. Phosphoserine is present on Ser-128. The uroporphyrinogen-III C-methyltransferase stretch occupies residues 218–461; the sequence is GSVSLVGAGP…HNEISWFGNG (244 aa). Pro-227 provides a ligand contact to S-adenosyl-L-methionine. The active-site Proton acceptor is the Asp-250. Lys-272 acts as the Proton donor in catalysis. S-adenosyl-L-methionine is bound by residues 303 to 305, Ile-308, Met-386, and Gly-415; that span reads GGD.

It in the N-terminal section; belongs to the precorrin-2 dehydrogenase / sirohydrochlorin ferrochelatase family. In the C-terminal section; belongs to the precorrin methyltransferase family.

The enzyme catalyses uroporphyrinogen III + 2 S-adenosyl-L-methionine = precorrin-2 + 2 S-adenosyl-L-homocysteine + H(+). The catalysed reaction is precorrin-2 + NAD(+) = sirohydrochlorin + NADH + 2 H(+). It carries out the reaction siroheme + 2 H(+) = sirohydrochlorin + Fe(2+). The protein operates within cofactor biosynthesis; adenosylcobalamin biosynthesis; precorrin-2 from uroporphyrinogen III: step 1/1. Its pathway is cofactor biosynthesis; adenosylcobalamin biosynthesis; sirohydrochlorin from precorrin-2: step 1/1. It functions in the pathway porphyrin-containing compound metabolism; siroheme biosynthesis; precorrin-2 from uroporphyrinogen III: step 1/1. It participates in porphyrin-containing compound metabolism; siroheme biosynthesis; siroheme from sirohydrochlorin: step 1/1. The protein operates within porphyrin-containing compound metabolism; siroheme biosynthesis; sirohydrochlorin from precorrin-2: step 1/1. In terms of biological role, multifunctional enzyme that catalyzes the SAM-dependent methylations of uroporphyrinogen III at position C-2 and C-7 to form precorrin-2 via precorrin-1. Then it catalyzes the NAD-dependent ring dehydrogenation of precorrin-2 to yield sirohydrochlorin. Finally, it catalyzes the ferrochelation of sirohydrochlorin to yield siroheme. The chain is Siroheme synthase from Blochmanniella floridana.